The sequence spans 65 residues: Large ribosomal subunit protein bL35 (65 aa).

Residues 1–23 (MPKMKTHRGAAKRFKKTGTGKLK) are disordered.

Belongs to the bacterial ribosomal protein bL35 family.

This Clostridium perfringens (strain ATCC 13124 / DSM 756 / JCM 1290 / NCIMB 6125 / NCTC 8237 / Type A) protein is Large ribosomal subunit protein bL35.